The chain runs to 292 residues: Ephrin type-A receptor 4a (292 aa).

Residues 1–9 and Lys27 each bind ATP; that span reads IGIGEFGEV. The 265-residue stretch at 1–265 folds into the Protein kinase domain; the sequence is IGIGEFGEVC…QIVNMLDKLI (265 aa). Residue Asp120 is the Proton acceptor of the active site. Tyr153 is subject to Phosphotyrosine; by autocatalysis.

Belongs to the protein kinase superfamily. Tyr protein kinase family. Ephrin receptor subfamily. As to expression, widely expressed in the developing nervous system.

It localises to the cell membrane. Its subcellular location is the early endosome. The enzyme catalyses L-tyrosyl-[protein] + ATP = O-phospho-L-tyrosyl-[protein] + ADP + H(+). Functionally, receptor tyrosine kinase which binds membrane-bound ephrin family ligands residing on adjacent cells, leading to contact-dependent bidirectional signaling into neighboring cells. The signaling pathway downstream of the receptor is referred to as forward signaling while the signaling pathway downstream of the ephrin ligand is referred to as reverse signaling. Highly promiscuous, it has the unique property among Eph receptors to bind and to be physiologically activated by both GPI-anchored ephrin-A and transmembrane ephrin-B ligands including efna1 and efnb3. Upon activation by ephrin ligands, modulates cell morphology and integrin-dependent cell adhesion through regulation of the Rac, Rap and Rho GTPases activity. Plays an important role in the development of the nervous system controlling different steps of axonal guidance including the establishment of the corticospinal projections. The sequence is that of Ephrin type-A receptor 4a (epha4a) from Danio rerio (Zebrafish).